A 502-amino-acid polypeptide reads, in one-letter code: Glycerol kinase (502 aa).

T14 serves as a coordination point for ADP. The ATP site is built by T14, T15, and S16. T14 contributes to the sn-glycerol 3-phosphate binding site. R18 provides a ligand contact to ADP. Sn-glycerol 3-phosphate contacts are provided by R84, E85, and Y136. The glycerol site is built by R84, E85, and Y136. H232 is subject to Phosphohistidine; by HPr. D246 serves as a coordination point for sn-glycerol 3-phosphate. Residues D246 and Q247 each contribute to the glycerol site. Positions 268 and 311 each coordinate ADP. Positions 268, 311, 315, and 412 each coordinate ATP. ADP-binding residues include G412 and N416.

It belongs to the FGGY kinase family. Homotetramer and homodimer (in equilibrium). The phosphoenolpyruvate-dependent sugar phosphotransferase system (PTS), including enzyme I, and histidine-containing protein (HPr) are required for the phosphorylation, which leads to the activation of the enzyme.

It carries out the reaction glycerol + ATP = sn-glycerol 3-phosphate + ADP + H(+). It participates in polyol metabolism; glycerol degradation via glycerol kinase pathway; sn-glycerol 3-phosphate from glycerol: step 1/1. With respect to regulation, activated by phosphorylation and inhibited by fructose 1,6-bisphosphate (FBP). Its function is as follows. Key enzyme in the regulation of glycerol uptake and metabolism. Catalyzes the phosphorylation of glycerol to yield sn-glycerol 3-phosphate. This chain is Glycerol kinase, found in Streptococcus pneumoniae (strain Hungary19A-6).